A 449-amino-acid polypeptide reads, in one-letter code: GTP-binding protein A (449 aa).

Residues 1-77 (MFNINPYKSK…LSSKTENSLS (77 aa)) are disordered. Composition is skewed to low complexity over residues 8–46 (KSKTTKSSSSSSASPKSSKISNVSGSGSSSSSSSSSSSS) and 67–77 (SLSSKTENSLS). Positions 149 to 386 (QNECNVLLLG…FMGHLRAKNK (238 aa)) constitute an AIG1-type G domain. The segment at 158 to 165 (GRTGVGKS) is G1. 158–165 (GRTGVGKS) is a GTP binding site. The interval 183 to 187 (SCTQD) is G2. A G3 region spans residues 204–207 (DTPG). Positions 275-278 (TYAN) are G4. The interval 336 to 338 (ENS) is G5.

It belongs to the TRAFAC class TrmE-Era-EngA-EngB-Septin-like GTPase superfamily. AIG1/Toc34/Toc159-like paraseptin GTPase family. IAN subfamily.

This chain is GTP-binding protein A (gtpA), found in Dictyostelium discoideum (Social amoeba).